Reading from the N-terminus, the 725-residue chain is Exocyst complex component 8 (725 aa).

Ser-19 is subject to Phosphoserine. A disordered region spans residues 137-159; sequence AGFFSTPGGASRDGSGPGEEGKQ. Thr-142 carries the phosphothreonine modification. Residues 182-282 enclose the PH domain; that stretch reads YLVYNGDLVE…WLEVLEDTKR (101 aa). A disordered region spans residues 285 to 328; it reads SEKRRREQEEAAAPRGPPQVTSKATNPFEDDEEEEPAVPEVEEE. Over residues 312-328 the composition is skewed to acidic residues; it reads FEDDEEEEPAVPEVEEE.

The protein belongs to the EXO84 family. In terms of assembly, the exocyst complex is composed of EXOC1, EXOC2, EXOC3, EXOC4, EXOC5, EXOC6, EXOC7 and EXOC8. Interacts (via PH domain) with GTP-bound RALA and RALB. Interacts with SH3BP1; required for the localization of both SH3BP1 and the exocyst to the leading edge of migrating cells.

The protein resides in the cytoplasm. It localises to the perinuclear region. Its subcellular location is the cell projection. The protein localises to the growth cone. In terms of biological role, component of the exocyst complex involved in the docking of exocytic vesicles with fusion sites on the plasma membrane. The sequence is that of Exocyst complex component 8 (EXOC8) from Homo sapiens (Human).